Reading from the N-terminus, the 737-residue chain is Phosphoribosylformylglycinamidine synthase subunit PurL (737 aa).

Histidine 50 is an active-site residue. Tyrosine 53 and lysine 92 together coordinate ATP. Residue glutamate 94 participates in Mg(2+) binding. Residues 95 to 98 and arginine 117 each bind substrate; that span reads SHNH. Catalysis depends on histidine 96, which acts as the Proton acceptor. Mg(2+) is bound at residue aspartate 118. Glutamine 241 provides a ligand contact to substrate. Residue aspartate 269 coordinates Mg(2+). 313–315 serves as a coordination point for substrate; sequence ESQ. ATP is bound by residues aspartate 494 and glycine 531. Asparagine 532 contacts Mg(2+). Residue serine 534 coordinates substrate.

This sequence belongs to the FGAMS family. As to quaternary structure, monomer. Part of the FGAM synthase complex composed of 1 PurL, 1 PurQ and 2 PurS subunits.

Its subcellular location is the cytoplasm. The enzyme catalyses N(2)-formyl-N(1)-(5-phospho-beta-D-ribosyl)glycinamide + L-glutamine + ATP + H2O = 2-formamido-N(1)-(5-O-phospho-beta-D-ribosyl)acetamidine + L-glutamate + ADP + phosphate + H(+). It functions in the pathway purine metabolism; IMP biosynthesis via de novo pathway; 5-amino-1-(5-phospho-D-ribosyl)imidazole from N(2)-formyl-N(1)-(5-phospho-D-ribosyl)glycinamide: step 1/2. Functionally, part of the phosphoribosylformylglycinamidine synthase complex involved in the purines biosynthetic pathway. Catalyzes the ATP-dependent conversion of formylglycinamide ribonucleotide (FGAR) and glutamine to yield formylglycinamidine ribonucleotide (FGAM) and glutamate. The FGAM synthase complex is composed of three subunits. PurQ produces an ammonia molecule by converting glutamine to glutamate. PurL transfers the ammonia molecule to FGAR to form FGAM in an ATP-dependent manner. PurS interacts with PurQ and PurL and is thought to assist in the transfer of the ammonia molecule from PurQ to PurL. The chain is Phosphoribosylformylglycinamidine synthase subunit PurL from Rhodopseudomonas palustris (strain BisA53).